The sequence spans 286 residues: Pantothenate synthetase (286 aa).

ATP is bound at residue 30-37 (MGNLHAGH). The active-site Proton donor is the H37. Q61 serves as a coordination point for (R)-pantoate. Q61 contacts beta-alanine. ATP is bound at residue 149–152 (GQKD). Q155 contacts (R)-pantoate. Residues V178 and 186 to 189 (LSSR) contribute to the ATP site.

It belongs to the pantothenate synthetase family. Homodimer.

The protein resides in the cytoplasm. It catalyses the reaction (R)-pantoate + beta-alanine + ATP = (R)-pantothenate + AMP + diphosphate + H(+). The protein operates within cofactor biosynthesis; (R)-pantothenate biosynthesis; (R)-pantothenate from (R)-pantoate and beta-alanine: step 1/1. In terms of biological role, catalyzes the condensation of pantoate with beta-alanine in an ATP-dependent reaction via a pantoyl-adenylate intermediate. This Stutzerimonas stutzeri (strain A1501) (Pseudomonas stutzeri) protein is Pantothenate synthetase.